An 866-amino-acid chain; its full sequence is Putative linoleate 9S-lipoxygenase 3 (866 aa).

A PLAT domain is found at 33 to 161 (NDFGATVIDG…KYRYDRVFFA (129 aa)). One can recognise a Lipoxygenase domain in the interval 164 to 866 (AYLPSQMPAA…AKGIPNSISI (703 aa)). Positions 206 to 250 (YNDLGSPDSGNPRPILGGSPDTPYPRRGRTGRKPTTTDPDSESRL) are disordered. Fe cation contacts are provided by H521, H526, H712, N716, and I866.

This sequence belongs to the lipoxygenase family. Fe cation is required as a cofactor.

The catalysed reaction is (9Z,12Z)-octadecadienoate + O2 = (9S)-hydroperoxy-(10E,12Z)-octadecadienoate. It functions in the pathway lipid metabolism; oxylipin biosynthesis. Plant lipoxygenase may be involved in a number of diverse aspects of plant physiology including growth and development, pest resistance, and senescence or responses to wounding. Catalyzes the hydroperoxidation of lipids containing a cis,cis-1,4-pentadiene structure. The sequence is that of Putative linoleate 9S-lipoxygenase 3 from Oryza sativa subsp. japonica (Rice).